The following is a 599-amino-acid chain: Proline--tRNA ligase (599 aa).

It belongs to the class-II aminoacyl-tRNA synthetase family. ProS type 1 subfamily. Homodimer.

Its subcellular location is the cytoplasm. It carries out the reaction tRNA(Pro) + L-proline + ATP = L-prolyl-tRNA(Pro) + AMP + diphosphate. Its function is as follows. Catalyzes the attachment of proline to tRNA(Pro) in a two-step reaction: proline is first activated by ATP to form Pro-AMP and then transferred to the acceptor end of tRNA(Pro). As ProRS can inadvertently accommodate and process non-cognate amino acids such as alanine and cysteine, to avoid such errors it has two additional distinct editing activities against alanine. One activity is designated as 'pretransfer' editing and involves the tRNA(Pro)-independent hydrolysis of activated Ala-AMP. The other activity is designated 'posttransfer' editing and involves deacylation of mischarged Ala-tRNA(Pro). The misacylated Cys-tRNA(Pro) is not edited by ProRS. This Bifidobacterium animalis subsp. lactis (strain AD011) protein is Proline--tRNA ligase.